A 175-amino-acid chain; its full sequence is NADH-ubiquinone oxidoreductase chain 6 (175 aa).

Helical transmembrane passes span methionine 1–serine 21, serine 25–leucine 45, phenylalanine 47–valine 67, alanine 88–leucine 108, and tyrosine 149–methionine 169.

This sequence belongs to the complex I subunit 6 family. In terms of assembly, core subunit of respiratory chain NADH dehydrogenase (Complex I) which is composed of 45 different subunits.

It localises to the mitochondrion inner membrane. The enzyme catalyses a ubiquinone + NADH + 5 H(+)(in) = a ubiquinol + NAD(+) + 4 H(+)(out). Its function is as follows. Core subunit of the mitochondrial membrane respiratory chain NADH dehydrogenase (Complex I) which catalyzes electron transfer from NADH through the respiratory chain, using ubiquinone as an electron acceptor. Essential for the catalytic activity and assembly of complex I. This Halichoerus grypus (Gray seal) protein is NADH-ubiquinone oxidoreductase chain 6 (MT-ND6).